The following is a 24-amino-acid chain: Unknown protein NF004 from 2D-PAGE (24 aa).

This chain is Unknown protein NF004 from 2D-PAGE, found in Naegleria fowleri (Brain eating amoeba).